The chain runs to 469 residues: Swarming motility regulation sensor protein RssA (469 aa).

2 consecutive transmembrane segments (helical) span residues 12 to 32 and 167 to 187; these read IIFQ…WVKY and VPLL…AYFS. The 215-residue stretch at 245–459 folds into the Histidine kinase domain; that stretch reads DAAHELRTPI…GFIIDLPESY (215 aa). The residue at position 248 (His-248) is a Phosphohistidine; by autocatalysis.

It is found in the cell inner membrane. It catalyses the reaction ATP + protein L-histidine = ADP + protein N-phospho-L-histidine.. Functionally, member of the two-component regulatory system RssA/RssB involved in regulation of swarming motility which has been shown to be inhibited by saturated fatty acids. RssA/RssB regulates cellular fatty acid composition, hemolysin production and cell surface topography. RssA/RssB negatively regulates the activity of SlhBA. It can also act as a negative regulator for the control of the swarming initiation. In Serratia marcescens, this protein is Swarming motility regulation sensor protein RssA (rssA).